Reading from the N-terminus, the 75-residue chain is Conotoxin VnMSGL-0111 (75 aa).

Positions 1–20 (MSGLEIMVLTLLLLVSMATS) are cleaved as a signal peptide. Positions 21 to 44 (HQDGGEKQATQRDAINVRRRSITR) are excised as a propeptide. 3 disulfides stabilise this stretch: Cys-48/Cys-60, Cys-52/Cys-69, and Cys-59/Cys-73.

The protein belongs to the conotoxin O3 superfamily. As to expression, expressed by the venom duct.

Its subcellular location is the secreted. The protein is Conotoxin VnMSGL-0111 of Conus ventricosus (Mediterranean cone).